The chain runs to 863 residues: Oleate activated transcription factor 3 (863 aa).

The segment at residues 19-47 is a DNA-binding region (zn(2)-C6 fungal-type); that stretch reads CTNCKKRKSKCDRTKPCGTCVRLGDVDSC. Residues 52–63 show a composition bias toward polar residues; that stretch reads DSSGQPESSPSL. The interval 52–81 is disordered; that stretch reads DSSGQPESSPSLNDADPLRKQSTPAERISP.

Belongs to the OAF3 family.

It localises to the cytoplasm. The protein localises to the nucleus. It is found in the mitochondrion. Functionally, transcriptional inhibitor with a significantly increased number of target genes in response to oleate. The chain is Oleate activated transcription factor 3 (OAF3) from Saccharomyces cerevisiae (strain RM11-1a) (Baker's yeast).